A 446-amino-acid polypeptide reads, in one-letter code: N-succinylarginine dihydrolase (446 aa).

Residues alanine 19–serine 28, asparagine 110, and histidine 137–arginine 138 contribute to the substrate site. Glutamate 174 is an active-site residue. Arginine 213 is a binding site for substrate. The active site involves histidine 249. The substrate site is built by aspartate 251 and asparagine 364. Residue cysteine 370 is the Nucleophile of the active site.

The protein belongs to the succinylarginine dihydrolase family. In terms of assembly, homodimer.

The catalysed reaction is N(2)-succinyl-L-arginine + 2 H2O + 2 H(+) = N(2)-succinyl-L-ornithine + 2 NH4(+) + CO2. It participates in amino-acid degradation; L-arginine degradation via AST pathway; L-glutamate and succinate from L-arginine: step 2/5. Catalyzes the hydrolysis of N(2)-succinylarginine into N(2)-succinylornithine, ammonia and CO(2). This is N-succinylarginine dihydrolase from Burkholderia thailandensis (strain ATCC 700388 / DSM 13276 / CCUG 48851 / CIP 106301 / E264).